The primary structure comprises 235 residues: Pyridoxine 5'-phosphate synthase (235 aa).

N6 is a binding site for 3-amino-2-oxopropyl phosphate. A 1-deoxy-D-xylulose 5-phosphate-binding site is contributed by 8–9; that stretch reads DH. Residue R17 participates in 3-amino-2-oxopropyl phosphate binding. H42 functions as the Proton acceptor in the catalytic mechanism. Residues R44 and H49 each contribute to the 1-deoxy-D-xylulose 5-phosphate site. The Proton acceptor role is filled by E69. T99 serves as a coordination point for 1-deoxy-D-xylulose 5-phosphate. Catalysis depends on H188, which acts as the Proton donor. 3-amino-2-oxopropyl phosphate contacts are provided by residues G189 and 210 to 211; that span reads GH.

It belongs to the PNP synthase family. As to quaternary structure, homooctamer; tetramer of dimers.

The protein resides in the cytoplasm. It catalyses the reaction 3-amino-2-oxopropyl phosphate + 1-deoxy-D-xylulose 5-phosphate = pyridoxine 5'-phosphate + phosphate + 2 H2O + H(+). Its pathway is cofactor biosynthesis; pyridoxine 5'-phosphate biosynthesis; pyridoxine 5'-phosphate from D-erythrose 4-phosphate: step 5/5. Its function is as follows. Catalyzes the complicated ring closure reaction between the two acyclic compounds 1-deoxy-D-xylulose-5-phosphate (DXP) and 3-amino-2-oxopropyl phosphate (1-amino-acetone-3-phosphate or AAP) to form pyridoxine 5'-phosphate (PNP) and inorganic phosphate. The sequence is that of Pyridoxine 5'-phosphate synthase from Wolbachia sp. subsp. Drosophila simulans (strain wRi).